The sequence spans 560 residues: MEPKRKSGSLAKHDLPQFYLLIMLYLAQGIPVGLAFGTVPFLLKSLAKETSFTSLGIFSMATYPYSLKIIWSPIVDSLYNKRIGRRRSWIIPVQFVSGFVLWALGWCISQGIIFDGVDDAFHNRGNGTLHSVSIKNLTWWFGLLVFLCATQDIAVDGWALTILSKESLSYASTAQTIGLNIGYFMSFTIFLSLNSSDFANKYFRNIPLDHGFISLGGYMKFSGMLYIVITIYIIFCTKEKPYVEYLPKVEPINTSDGGSKPISIEYDDGDVVSTQNTSSIKYIYRCFIKVLKLKSVRSLAFIHMISKFAFQCNEAATNLKLLEQGFKREDLAVTVLIDLPFEIIFGYYVVKWSSDKDPMIRDNRRLRNSTGTNKVIKFLVGDAGVLTPWLWGFLGRLAAAVLGSYVVKQFPKDGEISTGYFCLVIFQHLLGSFMNTVQFIGISAFHTRVADPVLGGTYMTLLNTLSNFGGTWPRLIIMSMINYFTVYQCTIPGTNKVYVTHGGSMQACTELLNGTVTILRDGYYITNLICIVVGLFLYFGYLKRKILHLQSLPISSWRCT.

Over 1-17 the chain is Cytoplasmic; sequence MEPKRKSGSLAKHDLPQ. The chain crosses the membrane as a helical span at residues 18–38; it reads FYLLIMLYLAQGIPVGLAFGT. At 39–54 the chain is on the extracellular side; sequence VPFLLKSLAKETSFTS. Residues 55–75 form a helical membrane-spanning segment; that stretch reads LGIFSMATYPYSLKIIWSPIV. Residues 76-88 lie on the Cytoplasmic side of the membrane; sequence DSLYNKRIGRRRS. Residues 89-109 traverse the membrane as a helical segment; the sequence is WIIPVQFVSGFVLWALGWCIS. Residues 110 to 139 are Extracellular-facing; that stretch reads QGIIFDGVDDAFHNRGNGTLHSVSIKNLTW. Residues 140 to 160 form a helical membrane-spanning segment; it reads WFGLLVFLCATQDIAVDGWAL. Topologically, residues 161–172 are cytoplasmic; it reads TILSKESLSYAS. A helical membrane pass occupies residues 173 to 193; it reads TAQTIGLNIGYFMSFTIFLSL. At 194–214 the chain is on the extracellular side; sequence NSSDFANKYFRNIPLDHGFIS. A helical membrane pass occupies residues 215 to 235; sequence LGGYMKFSGMLYIVITIYIIF. Topologically, residues 236–329 are cytoplasmic; sequence CTKEKPYVEY…KLLEQGFKRE (94 aa). A helical transmembrane segment spans residues 330 to 350; that stretch reads DLAVTVLIDLPFEIIFGYYVV. Over 351 to 374 the chain is Extracellular; it reads KWSSDKDPMIRDNRRLRNSTGTNK. A helical membrane pass occupies residues 375 to 395; sequence VIKFLVGDAGVLTPWLWGFLG. Residues 396–421 are Cytoplasmic-facing; that stretch reads RLAAAVLGSYVVKQFPKDGEISTGYF. Residues 422 to 442 form a helical membrane-spanning segment; that stretch reads CLVIFQHLLGSFMNTVQFIGI. At 443-521 the chain is on the extracellular side; the sequence is SAFHTRVADP…LNGTVTILRD (79 aa). Residues 522–542 traverse the membrane as a helical segment; the sequence is GYYITNLICIVVGLFLYFGYL. At 543-560 the chain is on the cytoplasmic side; sequence KRKILHLQSLPISSWRCT.

It is found in the membrane. This is an uncharacterized protein from Saccharomyces cerevisiae (strain ATCC 204508 / S288c) (Baker's yeast).